A 312-amino-acid polypeptide reads, in one-letter code: DNA-directed RNA polymerase subunit alpha (312 aa).

Residues Met-1–Thr-226 are alpha N-terminal domain (alpha-NTD). The segment at Asn-242–Lys-312 is alpha C-terminal domain (alpha-CTD).

This sequence belongs to the RNA polymerase alpha chain family. In terms of assembly, homodimer. The RNAP catalytic core consists of 2 alpha, 1 beta, 1 beta' and 1 omega subunit. When a sigma factor is associated with the core the holoenzyme is formed, which can initiate transcription.

The enzyme catalyses RNA(n) + a ribonucleoside 5'-triphosphate = RNA(n+1) + diphosphate. DNA-dependent RNA polymerase catalyzes the transcription of DNA into RNA using the four ribonucleoside triphosphates as substrates. This Streptococcus thermophilus (strain CNRZ 1066) protein is DNA-directed RNA polymerase subunit alpha.